Consider the following 180-residue polypeptide: 3-hydroxyanthranilate 3,4-dioxygenase (180 aa).

Position 46 (R46) interacts with O2. Residues H50, E56, and H94 each contribute to the Fe cation site. Residue E56 participates in substrate binding. Residues R98 and E109 each coordinate substrate. 4 residues coordinate Fe cation: C124, C127, C161, and C164.

Belongs to the 3-HAO family. As to quaternary structure, homodimer. Fe(2+) serves as cofactor.

The catalysed reaction is 3-hydroxyanthranilate + O2 = (2Z,4Z)-2-amino-3-carboxymuconate 6-semialdehyde. It participates in cofactor biosynthesis; NAD(+) biosynthesis; quinolinate from L-kynurenine: step 3/3. Functionally, catalyzes the oxidative ring opening of 3-hydroxyanthranilate to 2-amino-3-carboxymuconate semialdehyde, which spontaneously cyclizes to quinolinate. In Ruegeria pomeroyi (strain ATCC 700808 / DSM 15171 / DSS-3) (Silicibacter pomeroyi), this protein is 3-hydroxyanthranilate 3,4-dioxygenase.